We begin with the raw amino-acid sequence, 75 residues long: Cytochrome c oxidase subunit 6C (75 aa).

Over 1–13 the chain is Mitochondrial matrix; it reads MAPEVLPKPQMRG. Residues 14–54 form a helical membrane-spanning segment; the sequence is LLARRLRFHMVTGFVLSLGVAALYKVGVADKRKKAYADFYR. At 55–75 the chain is on the mitochondrial intermembrane side; it reads NYDAMKDFEEMRKAGIFQSVK.

This sequence belongs to the cytochrome c oxidase subunit 6c family. In terms of assembly, component of the cytochrome c oxidase (complex IV, CIV), a multisubunit enzyme composed of 14 subunits. The complex is composed of a catalytic core of 3 subunits MT-CO1, MT-CO2 and MT-CO3, encoded in the mitochondrial DNA, and 11 supernumerary subunits COX4I, COX5A, COX5B, COX6A, COX6B, COX6C, COX7A, COX7B, COX7C, COX8 and NDUFA4, which are encoded in the nuclear genome. The complex exists as a monomer or a dimer and forms supercomplexes (SCs) in the inner mitochondrial membrane with NADH-ubiquinone oxidoreductase (complex I, CI) and ubiquinol-cytochrome c oxidoreductase (cytochrome b-c1 complex, complex III, CIII), resulting in different assemblies (supercomplex SCI(1)III(2)IV(1) and megacomplex MCI(2)III(2)IV(2)).

It localises to the mitochondrion inner membrane. It participates in energy metabolism; oxidative phosphorylation. Functionally, component of the cytochrome c oxidase, the last enzyme in the mitochondrial electron transport chain which drives oxidative phosphorylation. The respiratory chain contains 3 multisubunit complexes succinate dehydrogenase (complex II, CII), ubiquinol-cytochrome c oxidoreductase (cytochrome b-c1 complex, complex III, CIII) and cytochrome c oxidase (complex IV, CIV), that cooperate to transfer electrons derived from NADH and succinate to molecular oxygen, creating an electrochemical gradient over the inner membrane that drives transmembrane transport and the ATP synthase. Cytochrome c oxidase is the component of the respiratory chain that catalyzes the reduction of oxygen to water. Electrons originating from reduced cytochrome c in the intermembrane space (IMS) are transferred via the dinuclear copper A center (CU(A)) of subunit 2 and heme A of subunit 1 to the active site in subunit 1, a binuclear center (BNC) formed by heme A3 and copper B (CU(B)). The BNC reduces molecular oxygen to 2 water molecules using 4 electrons from cytochrome c in the IMS and 4 protons from the mitochondrial matrix. The sequence is that of Cytochrome c oxidase subunit 6C (COX6C) from Macaca silenus (Lion-tailed macaque).